A 479-amino-acid chain; its full sequence is F-box protein At5g51380 (479 aa).

The tract at residues 1–20 (MTFREKMPTSPKSPLRRRRS) is disordered. One can recognise an F-box domain in the interval 62–108 (DRTLSLSDSLLLKILEKLPESQNEDVSLVCKRWLSVQGRRLRSMKVF).

This chain is F-box protein At5g51380, found in Arabidopsis thaliana (Mouse-ear cress).